Consider the following 846-residue polypeptide: Translation initiation factor IF-2 (846 aa).

Residues 198–219 (YKREEEEKKSKAKKAGGKGFKK) are disordered. The span at 207-219 (SKAKKAGGKGFKK) shows a compositional bias: basic residues. The 168-residue stretch at 345–512 (SRAPVVTIMG…AVLLQSEVLE (168 aa)) folds into the tr-type G domain. A G1 region spans residues 354 to 361 (GHVDHGKT). Position 354–361 (354–361 (GHVDHGKT)) interacts with GTP. The segment at 379–383 (GITQH) is G2. The segment at 400–403 (DTPG) is G3. GTP contacts are provided by residues 400-404 (DTPGH) and 454-457 (NKID). Residues 454–457 (NKID) form a G4 region. Residues 490–492 (SAK) form a G5 region.

Belongs to the TRAFAC class translation factor GTPase superfamily. Classic translation factor GTPase family. IF-2 subfamily.

It is found in the cytoplasm. Functionally, one of the essential components for the initiation of protein synthesis. Protects formylmethionyl-tRNA from spontaneous hydrolysis and promotes its binding to the 30S ribosomal subunits. Also involved in the hydrolysis of GTP during the formation of the 70S ribosomal complex. This chain is Translation initiation factor IF-2, found in Francisella tularensis subsp. holarctica (strain OSU18).